The sequence spans 114 residues: Fumarate reductase subunit D (114 aa).

The next 3 helical transmembrane spans lie at 24–44, 49–69, and 94–114; these read ISAL…PLGI, GIIA…LTIF, and LIFY…VASI.

Belongs to the FrdD family. Part of an enzyme complex containing four subunits: a flavoprotein (FrdA), an iron-sulfur protein (FrdB), and two hydrophobic anchor proteins (FrdC and FrdD).

Its subcellular location is the cell inner membrane. Functionally, anchors the catalytic components of the fumarate reductase complex to the cell membrane, binds quinones. This chain is Fumarate reductase subunit D, found in Actinobacillus succinogenes (strain ATCC 55618 / DSM 22257 / CCUG 43843 / 130Z).